Consider the following 405-residue polypeptide: S-adenosylmethionine synthase (405 aa).

141-146 contributes to the ATP binding site; that stretch reads GQGSVD.

Belongs to the AdoMet synthase 2 family. It depends on Mg(2+) as a cofactor.

It catalyses the reaction L-methionine + ATP + H2O = S-adenosyl-L-methionine + phosphate + diphosphate. It functions in the pathway amino-acid biosynthesis; S-adenosyl-L-methionine biosynthesis; S-adenosyl-L-methionine from L-methionine: step 1/1. In terms of biological role, catalyzes the formation of S-adenosylmethionine from methionine and ATP. This is S-adenosylmethionine synthase from Methanococcus maripaludis (strain C5 / ATCC BAA-1333).